The primary structure comprises 341 residues: DNA-directed RNA polymerase subunit alpha (341 aa).

Residues 1 to 223 (MEQKRPQLKA…DELSVFGNVE (223 aa)) form an alpha N-terminal domain (alpha-NTD) region. Residues 268–341 (PQPFPTDQDT…LAQFGLALRD (74 aa)) are alpha C-terminal domain (alpha-CTD).

It belongs to the RNA polymerase alpha chain family. In terms of assembly, homodimer. The RNAP catalytic core consists of 2 alpha, 1 beta, 1 beta' and 1 omega subunit. When a sigma factor is associated with the core the holoenzyme is formed, which can initiate transcription.

It carries out the reaction RNA(n) + a ribonucleoside 5'-triphosphate = RNA(n+1) + diphosphate. Functionally, DNA-dependent RNA polymerase catalyzes the transcription of DNA into RNA using the four ribonucleoside triphosphates as substrates. The protein is DNA-directed RNA polymerase subunit alpha of Deinococcus radiodurans (strain ATCC 13939 / DSM 20539 / JCM 16871 / CCUG 27074 / LMG 4051 / NBRC 15346 / NCIMB 9279 / VKM B-1422 / R1).